A 1452-amino-acid chain; its full sequence is MRGLGTCLATLAGLLLTAAGETFSGGCLFDEPYSTCGYSQSEGDDFNWEQVNTLTKPTSDPWMPSGSFMLVNASGRPEGQRAHLLLPQLKENDTHCIDFHYFVSSKSNSPPGLLNVYVKVNNGPLGNPIWNISGDPTRTWNRAELAISTFWPNFYQVIFEVITSGHQGYLAIDEVKVLGHPCTRTPHFLRIQNVEVNAGQFATFQCSAIGRTVAGDRLWLQGIDVRDAPLKEIKVTSSRRFIASFNVVNTTKRDAGKYRCMIRTEGGVGISNYAELVVKEPPVPIAPPQLASVGATYLWIQLNANSINGDGPIVAREVEYCTASGSWNDRQPVDSTSYKIGHLDPDTEYEISVLLTRPGEGGTGSPGPALRTRTKCADPMRGPRKLEVVEVKSRQITIRWEPFGYNVTRCHSYNLTVHYCYQVGGQEQVREEVSWDTENSHPQHTITNLSPYTNVSVKLILMNPEGRKESQELIVQTDEDLPGAVPTESIQGSTFEEKIFLQWREPTQTYGVITLYEITYKAVSSFDPEIDLSNQSGRVSKLGNETHFLFFGLYPGTTYSFTIRASTAKGFGPPATNQFTTKISAPSMPAYELETPLNQTDNTVTVMLKPAHSRGAPVSVYQIVVEEERPRRTKKTTEILKCYPVPIHFQNASLLNSQYYFAAEFPADSLQAAQPFTIGDNKTYNGYWNTPLLPYKSYRIYFQAASRANGETKIDCVQVATKGAATPKPVPEPEKQTDHTVKIAGVIAGILLFVIIFLGVVLVMKKRKLAKKRKETMSSTRQEMTVMVNSMDKSYAEQGTNCDEAFSFMDTHNLNGRSVSSPSSFTMKTNTLSTSVPNSYYPDETHTMASDTSSLVQSHTYKKREPADVPYQTGQLHPAIRVADLLQHITQMKCAEGYGFKEEYESFFEGQSAPWDSAKKDENRMKNRYGNIIAYDHSRVRLQTIEGDTNSDYINGNYIDGYHRPNHYIATQGPMQETIYDFWRMVWHENTASIIMVTNLVEVGRVKCCKYWPDDTEIYKDIKVTLIETELLAEYVIRTFAVEKRGVHEIREIRQFHFTGWPDHGVPYHATGLLGFVRQVKSKSPPSAGPLVVHCSAGAGRTGCFIVIDIMLDMAEREGVVDIYNCVRELRSRRVNMVQTEEQYVFIHDAILEACLCGDTSVPASQVRSLYYDMNKLDPQTNSSQIKEEFRTLNMVTPTLRVEDCSIALLPRNHEKNRCMDILPPDRCLPFLITIDGESSNYINAALMDSYKQPSAFIVTQHPLPNTVKDFWRLVLDYHCTSVVMLNDVDPAQLCPQYWPENGVHRHGPIQVEFVSADLEEDIISRIFRIYNAARPQDGYRMVQQFQFLGWPMYRDTPVSKRSFLKLIRQVDKWQEEYNGGEGRTVVHCLNGGGRSGTFCAISIVCEMLRHQRTVDVFHAVKTLRNNKPNMVDLLDQYKFCYEVALEYLNSG.

An N-terminal signal peptide occupies residues 1–20; sequence MRGLGTCLATLAGLLLTAAG. At 21–742 the chain is on the extracellular side; the sequence is ETFSGGCLFD…PEKQTDHTVK (722 aa). An MAM domain is found at 22–184; sequence TFSGGCLFDE…VKVLGHPCTR (163 aa). Residues Cys-27 and Cys-36 are joined by a disulfide bond. N-linked (GlcNAc...) asparagine glycans are attached at residues Asn-72, Asn-92, Asn-131, and Asn-249. 2 cysteine pairs are disulfide-bonded: Cys-96–Cys-182 and Cys-206–Cys-260. The 92-residue stretch at 186 to 277 folds into the Ig-like C2-type domain; the sequence is PHFLRIQNVE…VGISNYAELV (92 aa). Fibronectin type-III domains are found at residues 284–379, 382–480, 482–587, and 589–671; these read PIAP…CADP, GPRK…TDED, PGAV…SAPS, and PAYE…DSLQ. N-linked (GlcNAc...) asparagine glycans are attached at residues Asn-406, Asn-414, Asn-454, Asn-534, Asn-544, Asn-598, Asn-651, and Asn-681. Residues 743-764 form a helical membrane-spanning segment; that stretch reads IAGVIAGILLFVIIFLGVVLVM. Residues 765 to 1452 lie on the Cytoplasmic side of the membrane; that stretch reads KKRKLAKKRK…EVALEYLNSG (688 aa). Phosphoserine is present on Ser-821. Tyrosine-protein phosphatase domains lie at 900-1154 and 1186-1448; these read FKEE…ILEA and IKEE…ALEY. Residues Asp-1063, 1095–1101, and Gln-1139 each bind substrate; that span reads CSAGAGR. The active-site Phosphocysteine intermediate is Cys-1095. Catalysis depends on Cys-1389, which acts as the Phosphocysteine intermediate.

The protein belongs to the protein-tyrosine phosphatase family. Receptor class 2B subfamily. As to quaternary structure, homodimer.

It localises to the cell membrane. It catalyses the reaction O-phospho-L-tyrosyl-[protein] + H2O = L-tyrosyl-[protein] + phosphate. Functionally, receptor protein-tyrosine phosphatase that mediates homotypic cell-cell interactions and plays a role in adipogenic differentiation via modulation of p120 catenin/CTNND1 phosphorylation. Promotes CTNND1 dephosphorylation and prevents its cytoplasmic localization where it inhibits SLC2A4 membrane trafficking. In turn, SLC2A4 is directed to the plasma membrane and performs its glucose transporter function. The chain is Receptor-type tyrosine-protein phosphatase mu (PTPRM) from Homo sapiens (Human).